The sequence spans 95 residues: Small ubiquitin-related modifier 2-A (95 aa).

Lys11 participates in a covalent cross-link: Glycyl lysine isopeptide (Lys-Gly) (interchain with G-Cter in SUMO). Residues 16 to 95 (DHINLKVAGQ…VFQQQTGGSF (80 aa)) form the Ubiquitin-like domain. Gly93 participates in a covalent cross-link: Glycyl lysine isopeptide (Gly-Lys) (interchain with K-? in acceptor proteins). A propeptide spanning residues 94 to 95 (SF) is cleaved from the precursor.

The protein belongs to the ubiquitin family. SUMO subfamily. Interacts with sae2 and ube2i. Covalently attached to a number of proteins, including top2. Polymeric chains can be formed through Lys-11 cross-linking. Post-translationally, cleavage of precursor form by a sentrin-specific protease is necessary for function.

Its subcellular location is the nucleus. In terms of biological role, ubiquitin-like protein that can be covalently attached to proteins as a monomer or as a lysine-linked polymer. Covalent attachment via an isopeptide bond to its substrates requires prior activation by the E1 complex sae1-sae2 and linkage to the E2 enzyme ube2i, and can be promoted by an E3 ligase such as pias1-4. This post-translational modification on lysine residues of proteins plays a crucial role in a number of cellular processes such as nuclear transport, DNA replication and repair, mitosis and signal transduction. Polymeric sumo2 chains are also susceptible to polyubiquitination which functions as a signal for proteasomal degradation of modified proteins. The sequence is that of Small ubiquitin-related modifier 2-A (sumo2-a) from Xenopus laevis (African clawed frog).